The chain runs to 197 residues: uncharacterized protein (197 aa).

This is an uncharacterized protein from Archaeoglobus fulgidus (strain ATCC 49558 / DSM 4304 / JCM 9628 / NBRC 100126 / VC-16).